Reading from the N-terminus, the 561-residue chain is uncharacterized protein (561 aa).

Disordered regions lie at residues 20–42 (IQEQ…GCSP) and 82–283 (QIGS…STPF). Basic and acidic residues predominate over residues 103-131 (DKISEDTDQERVVVCESLENKSSSKDKSP). Composition is skewed to basic residues over residues 135–156 (RSPK…KSSK) and 165–185 (KSSK…KRYR). Composition is skewed to basic and acidic residues over residues 192-203 (SLSRDRSSSRDR), 211-247 (YSRD…DRSP), and 259-272 (PLRD…RSVS).

The protein belongs to the mimivirus L41 family.

This is an uncharacterized protein from Acanthamoeba polyphaga (Amoeba).